The sequence spans 232 residues: MAKLSKRLQAFASKVDRQKLYAIEEALSLVKECASAKFDESIDVAVQLGIDAKKSDQVVRGSVVLPAGTGKSVRVAVFAQGEKAEQARAAGAEIVGMEDLAEQVKAGNLNFDVVIASPDTMRVVGTLGQILGPRGLMPNPKVGTVTPDVATAVKNAKAGQVQFRVDKAGIIHATIGRASFEPTALRSNLNALVEALQKAKPATSKGVYLRKIALSSTMGVGVRVDQATLAAQ.

This sequence belongs to the universal ribosomal protein uL1 family. In terms of assembly, part of the 50S ribosomal subunit.

Its function is as follows. Binds directly to 23S rRNA. The L1 stalk is quite mobile in the ribosome, and is involved in E site tRNA release. In terms of biological role, protein L1 is also a translational repressor protein, it controls the translation of the L11 operon by binding to its mRNA. The protein is Large ribosomal subunit protein uL1 of Paraburkholderia phymatum (strain DSM 17167 / CIP 108236 / LMG 21445 / STM815) (Burkholderia phymatum).